We begin with the raw amino-acid sequence, 224 residues long: Large ribosomal subunit protein bL25 (224 aa).

Belongs to the bacterial ribosomal protein bL25 family. CTC subfamily. As to quaternary structure, part of the 50S ribosomal subunit; part of the 5S rRNA/L5/L18/L25 subcomplex. Contacts the 5S rRNA. Binds to the 5S rRNA independently of L5 and L18.

This is one of the proteins that binds to the 5S RNA in the ribosome where it forms part of the central protuberance. The protein is Large ribosomal subunit protein bL25 of Psychrobacter arcticus (strain DSM 17307 / VKM B-2377 / 273-4).